Here is a 479-residue protein sequence, read N- to C-terminus: Glycine betaine methyltransferase (479 aa).

This sequence belongs to the trimethylamine methyltransferase family.

It carries out the reaction Co(I)-[glycine betaine-specific corrinoid protein] + glycine betaine + H(+) = methyl-Co(III)-[glycine betaine-specific corrinoid protein] + N,N-dimethylglycine. Its function is as follows. Methyltransferase able to methylate free cob(I)alamin in vitro, using glycine betaine as the methyl donor, yealding methylcobalamin (methylCbl) and dimethylglycine. In vivo, probably carries out the methylation of a corrinoid protein, likely the adjacently encoded DSY3155, with glycine betaine, to then supply methyl groups to tetrahydrofolate (THF) for ultimate conversion to carbon dioxide; oxidation of the methyl group would also provide reducing equivalents for anaerobic respiration. Thus, may function in the pathway that allows anaerobic methylotrophic growth of D.hafniense using glycine betaine. Cannot use quaternary amines such as carnitine and choline as substrates, nor tertiary amines such as dimethylglycine or trimethylamine. The sequence is that of Glycine betaine methyltransferase from Desulfitobacterium hafniense (strain Y51).